We begin with the raw amino-acid sequence, 319 residues long: Bidirectional sugar transporter SWEET15 (319 aa).

The Extracellular portion of the chain corresponds to 1 to 10; that stretch reads MAFMSMERST. A helical transmembrane segment spans residues 11 to 31; it reads WAFTFGILGNLISLMVFLSPL. Residues 13-99 enclose the MtN3/slv 1 domain; that stretch reads FTFGILGNLI…AMYLAYAPKS (87 aa). The Cytoplasmic portion of the chain corresponds to 32-50; it reads PTFYRVYRKKSTEGFQSTP. The chain crosses the membrane as a helical span at residues 51–71; that stretch reads YVVTLFSCMLWMYYAFVKSGA. Position 72 (E72) is a topological domain, extracellular. Residues 73 to 93 form a helical membrane-spanning segment; that stretch reads LLVTINGVGCVIETVYLAMYL. The Cytoplasmic segment spans residues 94 to 106; sequence AYAPKSARMLTAK. A helical membrane pass occupies residues 107–127; it reads MLLGLNIGLFGVIALVTLLLS. At 128–134 the chain is on the extracellular side; that stretch reads RGELRVH. A helical transmembrane segment spans residues 135-155; sequence VLGWICVAVSLSVFAAPLSII. Positions 135–219 constitute a MtN3/slv 2 domain; the sequence is VLGWICVAVS…ALYMAYRSKK (85 aa). Residues 156-167 are Cytoplasmic-facing; sequence RLVIRTKSVEFM. A helical membrane pass occupies residues 168–188; that stretch reads PFSLSFFLVLSAVIWFLYGLL. The Extracellular segment spans residues 189–191; the sequence is KKD. A helical transmembrane segment spans residues 192 to 212; sequence VFVALPNVLGFVFGVAQMALY. Residues 213 to 319 are Cytoplasmic-facing; it reads MAYRSKKPLV…KPDMAIVVEV (107 aa).

It belongs to the SWEET sugar transporter family. As to quaternary structure, forms homooligomers and/or heterooligomers.

Its subcellular location is the cell membrane. In terms of biological role, mediates both low-affinity uptake and efflux of sugar across the plasma membrane. This chain is Bidirectional sugar transporter SWEET15 (SWEET15), found in Oryza sativa subsp. indica (Rice).